The sequence spans 59 residues: Large ribosomal subunit protein bL32 (59 aa).

The interval 1–20 (MAVPRNRHSNARKNIRRSHH) is disordered.

Belongs to the bacterial ribosomal protein bL32 family.

In Chlamydia trachomatis serovar A (strain ATCC VR-571B / DSM 19440 / HAR-13), this protein is Large ribosomal subunit protein bL32.